The primary structure comprises 24 residues: Pseudin-2 (24 aa).

In terms of tissue distribution, expressed by the skin glands.

It localises to the secreted. Functionally, antimicrobial peptide with activity against fungus (C.albicans) and Gram-positive and Gram-negative bacteria (S.aureus and E.coli). Also has low hemolytic activity against human erythrocytes. The chain is Pseudin-2 from Pseudis paradoxa (Paradoxical frog).